The sequence spans 535 residues: Light-independent protochlorophyllide reductase subunit B (535 aa).

Asp-36 lines the [4Fe-4S] cluster pocket. Asp-292 serves as the catalytic Proton donor. Residue Gly-428 to Leu-429 participates in substrate binding. Residues Asp-446–Gly-483 are disordered.

It belongs to the ChlB/BchB/BchZ family. In terms of assembly, protochlorophyllide reductase is composed of three subunits; BchL, BchN and BchB. Forms a heterotetramer of two BchB and two BchN subunits. The cofactor is [4Fe-4S] cluster.

The catalysed reaction is chlorophyllide a + oxidized 2[4Fe-4S]-[ferredoxin] + 2 ADP + 2 phosphate = protochlorophyllide a + reduced 2[4Fe-4S]-[ferredoxin] + 2 ATP + 2 H2O. It functions in the pathway porphyrin-containing compound metabolism; bacteriochlorophyll biosynthesis (light-independent). Component of the dark-operative protochlorophyllide reductase (DPOR) that uses Mg-ATP and reduced ferredoxin to reduce ring D of protochlorophyllide (Pchlide) to form chlorophyllide a (Chlide). This reaction is light-independent. The NB-protein (BchN-BchB) is the catalytic component of the complex. The sequence is that of Light-independent protochlorophyllide reductase subunit B from Chlorobium limicola (strain DSM 245 / NBRC 103803 / 6330).